Consider the following 511-residue polypeptide: Bifunctional purine biosynthesis protein PurH (511 aa).

In terms of domain architecture, MGS-like spans 1 to 146; sequence MARLALLSVS…KNFAHTTVLT (146 aa).

Belongs to the PurH family.

The catalysed reaction is (6R)-10-formyltetrahydrofolate + 5-amino-1-(5-phospho-beta-D-ribosyl)imidazole-4-carboxamide = 5-formamido-1-(5-phospho-D-ribosyl)imidazole-4-carboxamide + (6S)-5,6,7,8-tetrahydrofolate. It carries out the reaction IMP + H2O = 5-formamido-1-(5-phospho-D-ribosyl)imidazole-4-carboxamide. The protein operates within purine metabolism; IMP biosynthesis via de novo pathway; 5-formamido-1-(5-phospho-D-ribosyl)imidazole-4-carboxamide from 5-amino-1-(5-phospho-D-ribosyl)imidazole-4-carboxamide (10-formyl THF route): step 1/1. It participates in purine metabolism; IMP biosynthesis via de novo pathway; IMP from 5-formamido-1-(5-phospho-D-ribosyl)imidazole-4-carboxamide: step 1/1. In Synechocystis sp. (strain ATCC 27184 / PCC 6803 / Kazusa), this protein is Bifunctional purine biosynthesis protein PurH.